The primary structure comprises 721 residues: Polyribonucleotide nucleotidyltransferase (721 aa).

Residues Asp-490 and Asp-496 each coordinate Mg(2+). Residues 557 to 618 (PRILTLKINP…EAVRQKIEGL (62 aa)) form the KH domain. An S1 motif domain is found at 625 to 693 (GEEYEGTVVK…DRGKIDLIRP (69 aa)). The segment at 696 to 721 (EGKIAPREPRAARAGGDRGGRPPRRE) is disordered.

It belongs to the polyribonucleotide nucleotidyltransferase family. Mg(2+) is required as a cofactor.

The protein localises to the cytoplasm. It catalyses the reaction RNA(n+1) + phosphate = RNA(n) + a ribonucleoside 5'-diphosphate. In terms of biological role, involved in mRNA degradation. Catalyzes the phosphorolysis of single-stranded polyribonucleotides processively in the 3'- to 5'-direction. This Deinococcus geothermalis (strain DSM 11300 / CIP 105573 / AG-3a) protein is Polyribonucleotide nucleotidyltransferase.